Here is a 662-residue protein sequence, read N- to C-terminus: tRNA 5-methylaminomethyl-2-thiouridine biosynthesis bifunctional protein MnmC (662 aa).

Residues 1-245 (MKQNAIQPAN…KREMLTGEMA (245 aa)) form a tRNA (mnm(5)s(2)U34)-methyltransferase region. The interval 270-662 (IGGGIASALL…RKLLKGKAVK (393 aa)) is FAD-dependent cmnm(5)s(2)U34 oxidoreductase.

The protein in the N-terminal section; belongs to the methyltransferase superfamily. tRNA (mnm(5)s(2)U34)-methyltransferase family. In the C-terminal section; belongs to the DAO family. The cofactor is FAD.

The protein resides in the cytoplasm. It carries out the reaction 5-aminomethyl-2-thiouridine(34) in tRNA + S-adenosyl-L-methionine = 5-methylaminomethyl-2-thiouridine(34) in tRNA + S-adenosyl-L-homocysteine + H(+). Its function is as follows. Catalyzes the last two steps in the biosynthesis of 5-methylaminomethyl-2-thiouridine (mnm(5)s(2)U) at the wobble position (U34) in tRNA. Catalyzes the FAD-dependent demodification of cmnm(5)s(2)U34 to nm(5)s(2)U34, followed by the transfer of a methyl group from S-adenosyl-L-methionine to nm(5)s(2)U34, to form mnm(5)s(2)U34. The protein is tRNA 5-methylaminomethyl-2-thiouridine biosynthesis bifunctional protein MnmC of Klebsiella pneumoniae subsp. pneumoniae (strain ATCC 700721 / MGH 78578).